Reading from the N-terminus, the 311-residue chain is ATP synthase subunit gamma, mitochondrial (311 aa).

A mitochondrion-targeting transit peptide spans 1–33 (MLSRIVSNNATRSVMCHQAQVGILYKTNPVRTY).

The protein belongs to the ATPase gamma chain family. In terms of assembly, F-type ATPases have 2 components, CF(1) - the catalytic core - and CF(0) - the membrane proton channel. CF(1) has five subunits: alpha(3), beta(3), gamma(1), delta(1), epsilon(1). CF(0) has three main subunits: a, b and c.

It is found in the mitochondrion. The protein resides in the mitochondrion inner membrane. Functionally, mitochondrial membrane ATP synthase (F(1)F(0) ATP synthase or Complex V) produces ATP from ADP in the presence of a proton gradient across the membrane which is generated by electron transport complexes of the respiratory chain. F-type ATPases consist of two structural domains, F(1) - containing the extramembraneous catalytic core, and F(0) - containing the membrane proton channel, linked together by a central stalk and a peripheral stalk. During catalysis, ATP synthesis in the catalytic domain of F(1) is coupled via a rotary mechanism of the central stalk subunits to proton translocation. Part of the complex F(1) domain and the central stalk which is part of the complex rotary element. The gamma subunit protrudes into the catalytic domain formed of alpha(3)beta(3). Rotation of the central stalk against the surrounding alpha(3)beta(3) subunits leads to hydrolysis of ATP in three separate catalytic sites on the beta subunits. This chain is ATP synthase subunit gamma, mitochondrial (ATP3), found in Saccharomyces cerevisiae (strain ATCC 204508 / S288c) (Baker's yeast).